Consider the following 431-residue polypeptide: MGNNIKVTFNPDKIAAWWPAVGTYYTTTYPQNQSVFQPGIYQTTSLINPKNQQELDSVLINRYKQIDWNTWQGFPVDQKLPLVSRDPPPKPYINQSAQTFEIKPGPIIVPGIRDIPRGLVPPQTPTNRDQGRKPTPPTPPLRDTHPHLTMKNQTFHLQGFVDGLRDLTTTERQHNAYGDPFTTLSPAVPTVSTILSPPSTTGDPALSPEMSPSSLLGLLAGLQVVYFLWTKILTIAQNLDWWWTSLSFPGGIPECTGQNSQFQTCKHLPTSCPPTCNGFRWMYLRRFIIYLLVLLLCLIFLLVLLDWKGLIPVCPLQPTTETTVNCRQCTISAQDMYTPPYCCCLKPTAGNCTCWPIPSSWALGNYLWEWALARFSWLNLLVPLLQWLGGISLIAWFLLIWMIWFWGPALLSILPPFIPIFVLFFLIWVYI.

A lipid anchor (N-myristoyl glycine; by host) is attached at G2. Residues 2 to 148 form a pre-S1 region; the sequence is GNNIKVTFNP…PPLRDTHPHL (147 aa). The pre-S stretch occupies residues 2–207; that stretch reads GNNIKVTFNP…PSTTGDPALS (206 aa). The Virion surface; in external conformation portion of the chain corresponds to 2 to 214; that stretch reads GNNIKVTFNP…ALSPEMSPSS (213 aa). The Intravirion; in internal conformation portion of the chain corresponds to 2–286; it reads GNNIKVTFNP…NGFRWMYLRR (285 aa). N3 is a glycosylation site (N-linked (GlcNAc...) asparagine). The tract at residues 115-147 is disordered; it reads IPRGLVPPQTPTNRDQGRKPTPPTPPLRDTHPH. The segment at 149-207 is pre-S2; sequence TMKNQTFHLQGFVDGLRDLTTTERQHNAYGDPFTTLSPAVPTVSTILSPPSTTGDPALS. Residues 215-235 form a helical membrane-spanning segment; that stretch reads LLGLLAGLQVVYFLWTKILTI. Topologically, residues 236 to 286 are intravirion; in external conformation; sequence AQNLDWWWTSLSFPGGIPECTGQNSQFQTCKHLPTSCPPTCNGFRWMYLRR. The helical transmembrane segment at 287–307 threads the bilayer; sequence FIIYLLVLLLCLIFLLVLLDW. The Virion surface segment spans residues 308 to 379; the sequence is KGLIPVCPLQ…WALARFSWLN (72 aa). N351 carries an N-linked (GlcNAc...) asparagine; by host glycan. The chain crosses the membrane as a helical span at residues 380–400; that stretch reads LLVPLLQWLGGISLIAWFLLI. Residues 401-406 lie on the Intravirion side of the membrane; it reads WMIWFW. A helical membrane pass occupies residues 407-429; it reads GPALLSILPPFIPIFVLFFLIWV. Residues 430–431 lie on the Virion surface side of the membrane; that stretch reads YI.

It belongs to the orthohepadnavirus major surface antigen family. As to quaternary structure, in its internal form (Li-HBsAg), interacts with the capsid protein and with the isoform S. Interacts with host chaperone CANX. In terms of assembly, associates with host chaperone CANX through its pre-S2 N glycan; this association may be essential for isoform M proper secretion. Interacts with isoform L. Interacts with the antigens of satellite virus HDV (HDVAgs); this interaction is required for encapsidation of HDV genomic RNA. Isoform M is N-terminally acetylated by host at a ratio of 90%, and N-glycosylated by host at the pre-S2 region. Post-translationally, myristoylated.

It localises to the virion membrane. The large envelope protein exists in two topological conformations, one which is termed 'external' or Le-HBsAg and the other 'internal' or Li-HBsAg. In its external conformation the protein attaches the virus to cell receptors and thereby initiating infection. This interaction determines the species specificity and liver tropism. This attachment induces virion internalization predominantly through caveolin-mediated endocytosis. The large envelope protein also assures fusion between virion membrane and endosomal membrane. In its internal conformation the protein plays a role in virion morphogenesis and mediates the contact with the nucleocapsid like a matrix protein. Functionally, the middle envelope protein plays an important role in the budding of the virion. It is involved in the induction of budding in a nucleocapsid independent way. In this process the majority of envelope proteins bud to form subviral lipoprotein particles of 22 nm of diameter that do not contain a nucleocapsid. The protein is Large envelope protein of Woodchuck hepatitis B virus (isolate 7) (WHV).